We begin with the raw amino-acid sequence, 870 residues long: MKKTTWFAGRFPGYVSPLSSVALSVLAALCPLTSRGESYFNPAFLSADTASVADLSRFEKGNHQPPGIYRVDIWRNDEFVATQDIRFEAGAVGTGDKSGGLMPCFTPEWIKRLGVNTAAFPVSDKGVDTTCIHLPEKIPGAEVAFDFASMRLNISLPQASLLNSARGYIPPEEWDEGIPAALINYSFTGSRGTDSDSYFLSLLSGLNYGPWRLRNNGAWNYSKGDGYHSQRWNNIGTWVQRAIIPLKSELVMGDSNTGNDVFDSVGFRGARLYSSDNMYPDSLQGYAPTVRGIARTAAKLTIRQNGYVIYQSYVSPGAFAITDLNPTSSSGDLEVTVDEKDGSQQRYTVPYSTVPLLQREGRVKYDLVAGDFRSGNSQQSSPFFFQGTVIAGLPAGLTAYGGTQLADRYRAVVVGAGRNLGDWGAVSVDVTHARSQLADDSTHQGQSLRFLYAKSLNNYGTNFQLLGYRYSTRGFYTLDDVAYRSMEGYDYEYDSDGRRHKVPVAQSYHNLRYSKKGRFQVNISQNLGDYGSLYLSGSQQNYWNTADTNTWYQLGYASGWQGISYSLSWSWSESVGSSGADRILAFNMSVPFSVLTGRRYARDTILDRTYATFNANRNRDGDNSWQTGVGGTLLEGRNLSYSVTQGRSSSNGYSGSASASWQATYGTLGVGYNYDRDQHDYNWQLSGGVVGHADGITFSQPLGDTNVLIKAPGAKGVRIENQTGVKTDWRGYAVMPYATVYRYNRVALDTNTMDNHTDVENNVSSVVPTEGALVRAAFDTRIGVRAIITARLGGRPLPFGAIVRETASGITSMVGDDGQIYLSGLPLKGELFIQWGEGKNARCIAPYALAEDSLKQAITIASATCIRPAS.

Residues Met1–Ala27 form the signal peptide. Cys843 and Cys865 are oxidised to a cystine.

Belongs to the fimbrial export usher family.

The protein localises to the cell outer membrane. Its function is as follows. Involved in the export and assembly of FimA fimbrial subunits across the outer membrane. In Salmonella typhimurium (strain LT2 / SGSC1412 / ATCC 700720), this protein is Outer membrane usher protein FimD (fimD).